Reading from the N-terminus, the 99-residue chain is Transcriptional regulator WhiB2 (99 aa).

The region spanning 33–90 (LCAQTDPEAFFPEKGGSTRDAKRVCAKCEVREQCLKWAIDHDERFGIWGGMSERERRR) is the 4Fe-4S Wbl-type domain. The [4Fe-4S] cluster site is built by C34, C57, C60, and C66.

This sequence belongs to the WhiB family. [4Fe-4S] cluster serves as cofactor. In terms of processing, the Fe-S cluster can be nitrosylated by nitric oxide (NO). Post-translationally, upon Fe-S cluster removal intramolecular disulfide bonds are formed.

It localises to the cytoplasm. Its function is as follows. Acts as a transcriptional regulator. Probably redox-responsive. The apo- but not holo-form probably binds DNA. This is Transcriptional regulator WhiB2 (whiB2) from Bifidobacterium longum (strain NCC 2705).